The chain runs to 294 residues: Negative regulator of the PHO system (294 aa).

The 283-residue stretch at 7-289 (FQQLEKLGEG…ARQSLEHPWF (283 aa)) folds into the Protein kinase domain. Residues 13 to 21 (LGEGTYATV) and Lys-36 contribute to the ATP site. The active-site Proton acceptor is the Asp-130.

This sequence belongs to the protein kinase superfamily. CMGC Ser/Thr protein kinase family. CDC2/CDKX subfamily. As to quaternary structure, interacts with a number of cyclins.

It carries out the reaction L-seryl-[protein] + ATP = O-phospho-L-seryl-[protein] + ADP + H(+). The catalysed reaction is L-threonyl-[protein] + ATP = O-phospho-L-threonyl-[protein] + ADP + H(+). When phosphate concentrations are high it phosphorylates the PHO4 transcription factor thus establishing repression. The polypeptide is Negative regulator of the PHO system (PHO85) (Yarrowia lipolytica (strain CLIB 122 / E 150) (Yeast)).